The sequence spans 518 residues: Integrator complex subunit 14 (518 aa).

One can recognise a VWFA domain in the interval 2-204 (PTVVVMDVSL…KNVQSMFGKL (203 aa)). Mg(2+) is bound by residues S10, S12, and T86. At K418 the chain carries N6-acetyllysine.

The protein belongs to the Integrator subunit 14 family. Component of the Integrator complex, composed of core subunits INTS1, INTS2, INTS3, INTS4, INTS5, INTS6, INTS7, INTS8, INTS9/RC74, INTS10, INTS11/CPSF3L, INTS12, INTS13, INTS14 and INTS15. The core complex associates with protein phosphatase 2A subunits PPP2CA and PPP2R1A, to form the Integrator-PP2A (INTAC) complex. INTS14 is part of the tail subcomplex, composed of INTS10, INTS13, INTS14 and INTS15. In terms of tissue distribution, strongly expressed in numerous cancer cells compared with their non-cancerous counterparts (lung, prostate, colon, stomach and skin).

Its subcellular location is the nucleus. Component of the integrator complex, a multiprotein complex that terminates RNA polymerase II (Pol II) transcription in the promoter-proximal region of genes. The integrator complex provides a quality checkpoint during transcription elongation by driving premature transcription termination of transcripts that are unfavorably configured for transcriptional elongation: the complex terminates transcription by (1) catalyzing dephosphorylation of the C-terminal domain (CTD) of Pol II subunit POLR2A/RPB1 and SUPT5H/SPT5, (2) degrading the exiting nascent RNA transcript via endonuclease activity and (3) promoting the release of Pol II from bound DNA. The integrator complex is also involved in terminating the synthesis of non-coding Pol II transcripts, such as enhancer RNAs (eRNAs), small nuclear RNAs (snRNAs), telomerase RNAs and long non-coding RNAs (lncRNAs). Within the integrator complex, INTS14 is part of the integrator tail module that acts as a platform for the recruitment of transcription factors at promoters. The sequence is that of Integrator complex subunit 14 from Homo sapiens (Human).